The sequence spans 360 residues: Phospho-N-acetylmuramoyl-pentapeptide-transferase (360 aa).

10 consecutive transmembrane segments (helical) span residues 27-47 (IVGL…LIAW), 71-91 (TPTM…LLWA), 97-117 (YVWC…IDDY), 132-152 (WKYF…YAIG), 168-188 (VMPQ…VGTS), 199-219 (GLAI…AWAT), 236-256 (AGEL…FLWF), 263-283 (VFMG…IAVL), 288-308 (FLLV…ILQV), and 338-358 (VIVR…ATLK).

The protein belongs to the glycosyltransferase 4 family. MraY subfamily. The cofactor is Mg(2+).

Its subcellular location is the cell inner membrane. The catalysed reaction is UDP-N-acetyl-alpha-D-muramoyl-L-alanyl-gamma-D-glutamyl-meso-2,6-diaminopimeloyl-D-alanyl-D-alanine + di-trans,octa-cis-undecaprenyl phosphate = di-trans,octa-cis-undecaprenyl diphospho-N-acetyl-alpha-D-muramoyl-L-alanyl-D-glutamyl-meso-2,6-diaminopimeloyl-D-alanyl-D-alanine + UMP. Its pathway is cell wall biogenesis; peptidoglycan biosynthesis. Catalyzes the initial step of the lipid cycle reactions in the biosynthesis of the cell wall peptidoglycan: transfers peptidoglycan precursor phospho-MurNAc-pentapeptide from UDP-MurNAc-pentapeptide onto the lipid carrier undecaprenyl phosphate, yielding undecaprenyl-pyrophosphoryl-MurNAc-pentapeptide, known as lipid I. This is Phospho-N-acetylmuramoyl-pentapeptide-transferase from Proteus mirabilis (strain HI4320).